We begin with the raw amino-acid sequence, 1342 residues long: MVYSYTEKKRIRKDFGKRPQVLDVPYLLSIQLDSFQKFIEQDPEGQYGLEAAFRSVFPIQSYSGNSELQYVSYRLGEPVFDVQECQIRGVTYSAPLRVKLRLVIYEREAPEGTVKDIKEQEVYMGEIPLMTDNGTFVINGTERVIVSQLHRSPGVFFDSDKGKTHSSGKVLYNARIIPYRGSWLDFEFDPKDNLFVRIDRRRKLPATIILRALNYTTEQILDLFFEKVVFEIRDNKLQMELIPERLRGETASFDIEANGKVYVEKGRRITARHIRQLEKDDIKHIEVPVEYIAGKVVSKDYVDESTGELICAANMELSLDLLAKLSQSGHKRIETLFTNDLDHGPYISETVRVDPTNDRLSALVEIYRMMRPGEPPTREAAESLFENLFFSEDRYDLSAVGRMKFNRSLLRDEIEGSGILSKDDIIDVMKKLIDIRNGKGEVDDIDHLGNRRIRSVGEMAENQFRVGLVRVERAVKERLSLGDLDTLMPQDMINAKPISAAVKEFFGSSQLSQFMDQNNPLSEITHKRRISALGPGGLTRERAGFEVRDVHPTHYGRVCPIETPEGPNIGLINSLSVYAQTNEYGFLETPYRRVVDGVVTDEIHYLSAIEEGNYVIAQANSNLDDEGHFVEDLVTCRSKGESSLFSRDQVDYMDVSTQQVVSVGASLIPFLEHDDANRALMGANMQRQAVPTLRADKPLVGTGMERAVAVDSGVTAVAKRGGTVQYVDASRIVIKVNEDEMYPGEAGIDIYNLTKYTRSNQNTCINQMPCVSLGEPVERGDVLADGPSTDLGELALGQNMRVAFMPWNGYNFEDSILVSERVVQEDRFTTIHIQELACVSRDTKLGPEEITADIPNVGEAALSKLDESGIVYIGAEVTGGDILVGKVTPKGETQLTPEEKLLRAIFGEKASDVKDSFLRVPNGVSGTVIDVQVFTRDGVEKDKRALEIEEMQLKQAKKDLSEELQILEAGLFSRIRAVLVSGGVEAEKLDKLPRDRWLELGLTDEEKQNQLEQLAEQYDELKHEFEKKLEAKRRKITQGDDLAPGVLKIVKVYLAVKRRIQPGDKMAGRHGNKGVISKINPIEDMPYDENGTPVDIVLNPLGVPSRMNIGQILETHLGMAAKGIGDKINAMLKQQQEVAKLREFIQRAYDLGADVRQKVDLSTFSDDEVLRLAENLRKGMPIATPVFDGAKEAEIKELLKLGDLPTSGQITLFDGRTGEQFERPVTVGYMYMLKLNHLVDDKMHARSTGSYSLVTQQPLGGKAQFGGQRFGEMEVWALEAYGAAYTLQEMLTVKSDDVNGRTKMYKNIVDGNHQMEPGMPESFNVLLKEIRSLGINIELEDE.

This sequence belongs to the RNA polymerase beta chain family. The RNAP catalytic core consists of 2 alpha, 1 beta, 1 beta' and 1 omega subunit. When a sigma factor is associated with the core the holoenzyme is formed, which can initiate transcription.

It carries out the reaction RNA(n) + a ribonucleoside 5'-triphosphate = RNA(n+1) + diphosphate. DNA-dependent RNA polymerase catalyzes the transcription of DNA into RNA using the four ribonucleoside triphosphates as substrates. The chain is DNA-directed RNA polymerase subunit beta from Salmonella typhi.